The following is a 178-amino-acid chain: Large ribosomal subunit protein uL5 (178 aa).

Belongs to the universal ribosomal protein uL5 family. Part of the 50S ribosomal subunit; part of the 5S rRNA/L5/L18/L25 subcomplex. Contacts the 5S rRNA and the P site tRNA. Forms a bridge to the 30S subunit in the 70S ribosome.

Its function is as follows. This is one of the proteins that bind and probably mediate the attachment of the 5S RNA into the large ribosomal subunit, where it forms part of the central protuberance. In the 70S ribosome it contacts protein S13 of the 30S subunit (bridge B1b), connecting the 2 subunits; this bridge is implicated in subunit movement. Contacts the P site tRNA; the 5S rRNA and some of its associated proteins might help stabilize positioning of ribosome-bound tRNAs. The chain is Large ribosomal subunit protein uL5 from Wolbachia pipientis subsp. Culex pipiens (strain wPip).